The primary structure comprises 352 residues: Heat-inducible transcription repressor HrcA (352 aa).

It belongs to the HrcA family.

Negative regulator of class I heat shock genes (grpE-dnaK-dnaJ and groELS operons). Prevents heat-shock induction of these operons. This chain is Heat-inducible transcription repressor HrcA, found in Prochlorococcus marinus (strain MIT 9313).